The primary structure comprises 318 residues: Myeloid-associated differentiation marker (318 aa).

2 consecutive MARVEL domains span residues 25–157 (ALTQ…ARPG) and 162–315 (YMAT…RLVF). The next 8 helical transmembrane spans lie at 35–55 (LLQL…GAWT), 58–78 (MGNW…IILI), 95–115 (FPIT…IIYP), 131–151 (AIAA…EVAW), 165–185 (TVPG…FAFI), 197–217 (LEWC…TVLL), 233–253 (FLSG…VLWP), and 290–310 (LAVS…LVYS).

It belongs to the MAL family.

The protein localises to the membrane. The protein is Myeloid-associated differentiation marker (Myadm) of Rattus norvegicus (Rat).